Here is a 209-residue protein sequence, read N- to C-terminus: MSQEATEAPAMPGEGHGHNKAKARWLLGTDRKRSRINRTRQDLWEDTSWSNHRLSRATSAPRGTRARGTAHGRSEASPENAARERTRVKTLRQAFLALQAALPAVPPDTKLSKLDVLVLATSYIAHLTRTLGHELPGPAWPPFVRGLRYLHPLKKWPMRSRLYAGGLGCSDLDSTTAITTGQRCKDAELGSQDSVAAESLLTSPAFGNK.

2 disordered regions span residues 1-20 (MSQE…GHNK) and 54-85 (LSRA…ARER). The segment covering 72–85 (GRSEASPENAARER) has biased composition (basic and acidic residues). The bHLH domain occupies 75 to 127 (EASPENAARERTRVKTLRQAFLALQAALPAVPPDTKLSKLDVLVLATSYIAHL).

Forms inactive heterodimeric complex with TCF3. Highly expressed in the uterus (predominantly in myometrium), ovary, and testis. Expression in the uterus is higher in the diestrus phase than in the estrus phase and reaches a maximum at 7.5 dpc. Expression declines towards the time of delivery and returns to the non-pregnant level 4 days after delivery. Low expression seen in lung, heart, intestine, and spleen.

It is found in the nucleus. In terms of biological role, inhibits E-box-mediated binding and transactivation of bHLH factors. Inhibitory effect is similar to that of ID proteins. Inhibits the formation of TCF3 and MYOD1 homodimers and heterodimers. Lacks DNA binding activity. May be involved in the regulation or modulation of smooth muscle contraction of the uterus during pregnancy and particularly around the time of delivery. Seems to play a role in the inhibition of myogenesis. The protein is Transcription factor 23 (Tcf23) of Mus musculus (Mouse).